The chain runs to 120 residues: Large ribosomal subunit protein bL20 (120 aa).

Belongs to the bacterial ribosomal protein bL20 family.

Binds directly to 23S ribosomal RNA and is necessary for the in vitro assembly process of the 50S ribosomal subunit. It is not involved in the protein synthesizing functions of that subunit. This Cereibacter sphaeroides (strain ATCC 17025 / ATH 2.4.3) (Rhodobacter sphaeroides) protein is Large ribosomal subunit protein bL20.